The sequence spans 237 residues: Terpene cyclase spyD (237 aa).

Transmembrane regions (helical) follow at residues 17–37 (IYNVLVATAGMMWLINYIVTV), 47–67 (AIPLVSLCCNIAWEFTVVLVY), 71–91 (YLLFEIFCAMWLLVNMVIVYG), 109–129 (HLPLIVPLAILGCISGYYALA), 138–158 (IHGGGTFASFVMTVDCLCQLL), 167–187 (SWTMWLTRVLGSYAAIVGEFL), and 206–226 (WCTGMAVTMDILYACIFWYMG).

It belongs to the paxB family.

It localises to the membrane. It carries out the reaction (S)-(2E,6E,10E)-epoxygeranylgeranyl-triacetate lactone = sartorypyrone F. The catalysed reaction is (S)-(2E,6E,10E)-epoxygeranylgeranyl-triacetate lactone = sartorypyrone D. Its pathway is secondary metabolite biosynthesis; terpenoid biosynthesis. Its function is as follows. Terpene cyclase; part of the gene cluster that mediates the biosynthesis of meroterpenoids called sartorypyrones. Within the pathway, spyD catalyzes the cyclization of epoxygeranylgeranyl-triacetate lactone. SpyD exhibits promiscuous activity, resulting in the formation of bicyclic sartorypyrone F and monocyclic sartorypyrone D. The biosynthesis of sartorypyrones begins with the production of triacetic acid lactone (TAL) by the NR-PKS spyA using one molecule of acetyl-CoA and two molecules of malonyl-CoA. The prenyltransferase spyF then conjugates geranylgeranyl pyrophosphate (GGPP) to TAL to form geranylgeranyl-triacetate lactone, for which the pathway-specific geranylgeranyl pyrophosphate synthase (GGPS) spyE is required to provide GGPP. Subsequently, geranylgeranyl-triacetate lactone is epoxidized at the terminal olein by the FAD-dependent monooxygenase spyC, followed by cyclization of the terpenoid component catalyzed by the terpene cyclase spyD to produce both the bicyclic sartorypyrone F and the monocyclic sartorypyrone D. Finally, the last step of the biosynthesis involves the acetylation of the meroterpenoids sartorypyrones D and F by the acetyltransferase SpyB to produce sartorypyrones A and G, respectively. This chain is Terpene cyclase spyD, found in Aspergillus fumigatus (strain ATCC MYA-4609 / CBS 101355 / FGSC A1100 / Af293) (Neosartorya fumigata).